The following is a 330-amino-acid chain: MPSPAPPTELLPWERAVVLLSCALSALGSGLLVATHALWPDLRSRARRLLLFLSLADLLSAASYFYGVLQDFAGTSWDCVLQGALSTFANTSSFFWTVAIALYLYLSIVRTTRGPSTDHLIWAFHLISWGVPLAITVAAVSLKKIGYDASDVSVGWCWINLEAEDRVLWMLLTGKLWEMLAYILLPLLYLLVRKHINRAHQALSEYRPICEGRQLQRGSSTSTADKKLVLIPLIFICLRVWSTVRFVLTLCGSPAVQTPVLVVLHGIGNTFQGGANCIMFVLCTRAVRTRLFSLCCCCPRPSTQSPPGAPTPPKIGESQESRRTPEVPST.

Residues 1–15 (MPSPAPPTELLPWER) lie on the Extracellular side of the membrane. Residues 16–36 (AVVLLSCALSALGSGLLVATH) traverse the membrane as a helical segment. The Cytoplasmic segment spans residues 37 to 48 (ALWPDLRSRARR). Residues 49-69 (LLLFLSLADLLSAASYFYGVL) traverse the membrane as a helical segment. At 70-87 (QDFAGTSWDCVLQGALST) the chain is on the extracellular side. A helical membrane pass occupies residues 88–108 (FANTSSFFWTVAIALYLYLSI). Over 109-119 (VRTTRGPSTDH) the chain is Cytoplasmic. A helical transmembrane segment spans residues 120 to 140 (LIWAFHLISWGVPLAITVAAV). Residues 141–166 (SLKKIGYDASDVSVGWCWINLEAEDR) lie on the Extracellular side of the membrane. A helical transmembrane segment spans residues 167–187 (VLWMLLTGKLWEMLAYILLPL). The Cytoplasmic segment spans residues 188–227 (LYLLVRKHINRAHQALSEYRPICEGRQLQRGSSTSTADKK). The helical transmembrane segment at 228 to 248 (LVLIPLIFICLRVWSTVRFVL) threads the bilayer. At 249–259 (TLCGSPAVQTP) the chain is on the extracellular side. Residues 260-280 (VLVVLHGIGNTFQGGANCIMF) traverse the membrane as a helical segment. Topologically, residues 281-330 (VLCTRAVRTRLFSLCCCCPRPSTQSPPGAPTPPKIGESQESRRTPEVPST) are cytoplasmic. The disordered stretch occupies residues 301–330 (PSTQSPPGAPTPPKIGESQESRRTPEVPST). Over residues 317-330 (ESQESRRTPEVPST) the composition is skewed to basic and acidic residues.

This sequence belongs to the G-protein coupled receptor 2 family. As to expression, expressed in the primary cilia of radial glial progenitors (RGPs) in the developing neocortex.

The protein resides in the cell projection. The protein localises to the cilium membrane. Functionally, orphan receptor that promotes neuronal differentiation of radial glial progenitors (RGPs). The activity of this receptor is mediated by a G(q)-protein that activates a phosphatidylinositol-calcium second messenger. The chain is G-protein coupled receptor 157 (Gpr157) from Mus musculus (Mouse).